We begin with the raw amino-acid sequence, 20 residues long: Short cationic peptide-4d (20 aa).

The residue at position 20 (Glu-20) is a Glutamic acid 1-amide.

Expressed by the venom gland.

Its subcellular location is the secreted. In Cupiennius salei (American wandering spider), this protein is Short cationic peptide-4d.